The primary structure comprises 619 residues: DNA mismatch repair protein MutL (619 aa).

Belongs to the DNA mismatch repair MutL/HexB family.

This protein is involved in the repair of mismatches in DNA. It is required for dam-dependent methyl-directed DNA mismatch repair. May act as a 'molecular matchmaker', a protein that promotes the formation of a stable complex between two or more DNA-binding proteins in an ATP-dependent manner without itself being part of a final effector complex. The chain is DNA mismatch repair protein MutL from Shewanella frigidimarina (strain NCIMB 400).